Here is a 64-residue protein sequence, read N- to C-terminus: Prokaryotic ubiquitin-like protein Pup (64 aa).

Residues M1–D37 form a disordered region. Residues D21 to Y58 form an ARC ATPase binding region. Positions A24–E52 form a coiled coil. At Q64 the chain carries Deamidated glutamine. An Isoglutamyl lysine isopeptide (Gln-Lys) (interchain with K-? in acceptor proteins) cross-link involves residue Q64.

This sequence belongs to the prokaryotic ubiquitin-like protein family. In terms of assembly, strongly interacts with the proteasome-associated ATPase ARC through a hydrophobic interface; the interacting region of Pup lies in its C-terminal half. There is one Pup binding site per ARC hexamer ring. Post-translationally, is modified by deamidation of its C-terminal glutamine to glutamate by the deamidase Dop, a prerequisite to the subsequent pupylation process.

Its pathway is protein degradation; proteasomal Pup-dependent pathway. Functionally, protein modifier that is covalently attached to lysine residues of substrate proteins, thereby targeting them for proteasomal degradation. The tagging system is termed pupylation. The polypeptide is Prokaryotic ubiquitin-like protein Pup (Rhodococcus erythropolis (strain PR4 / NBRC 100887)).